Here is a 169-residue protein sequence, read N- to C-terminus: MLRSEKPVAVGDVVNIYKESPSIIITRYHGLTVSQVSSLRESLKSREAGFKVVKNTLAKIAAKQTGLDSIANLFAGPTAIVYSKEPVEMAKLVVNFAKSNGNLKIVGGIVDNRVLDEYSIKELSKLPSLNELRGKIVWLLQAPSTKVVGVLQAPSVSMARVLQAHASKN.

Belongs to the universal ribosomal protein uL10 family. Part of the ribosomal stalk of the 50S ribosomal subunit. The N-terminus interacts with L11 and the large rRNA to form the base of the stalk. The C-terminus forms an elongated spine to which L12 dimers bind in a sequential fashion forming a multimeric L10(L12)X complex.

Forms part of the ribosomal stalk, playing a central role in the interaction of the ribosome with GTP-bound translation factors. This chain is Large ribosomal subunit protein uL10, found in Rickettsia akari (strain Hartford).